The primary structure comprises 476 residues: mRNA cap guanine-N(7) methyltransferase (476 aa).

The segment covering 1–14 (MANSTKAEEYEKMS) has biased composition (basic and acidic residues). A disordered region spans residues 1 to 128 (MANSTKAEEY…TGDGTQNKRK (128 aa)). The segment covering 20-50 (ASVNSEAESSFSINENTTASGTGLSGKTSVC) has biased composition (polar residues). 3 positions are modified to phosphoserine: Ser24, Ser28, and Ser29. 3 stretches are compositionally biased toward basic and acidic residues: residues 54-68 (DTAR…DLVK), 84-93 (LDPEIVPEEK), and 107-117 (RETEDVPKDEY). Ser118 is modified (phosphoserine). Positions 126–128 (KRK) match the Nuclear localization signal motif. One can recognise an mRNA cap 0 methyltransferase domain in the interval 167 to 475 (SRIFYLRNFN…IYLVFAFEKQ (309 aa)). An mRNA-binding site is contributed by 176–177 (NN). Residues Lys180, Gly205, Asp227, Asp261, Gln284, and Tyr289 each contribute to the S-adenosyl-L-methionine site.

The protein belongs to the class I-like SAM-binding methyltransferase superfamily. mRNA cap 0 methyltransferase family. In terms of assembly, interacts with importin alpha, leading to stimulate both RNA-binding and methyltransferase activity. Interaction with importin alpha and beta is required for its nuclear localization, importin beta dissociating in response to RanGTP, allowing RNMT-importin alpha to bind RNA substrates. Interacts with elongating form of polymerase II and RNGTT. Interacts with RAMAC, this interaction significantly enhances RNA-binding and cap methyltransferase activity.

It is found in the nucleus. The enzyme catalyses a 5'-end (5'-triphosphoguanosine)-ribonucleoside in mRNA + S-adenosyl-L-methionine = a 5'-end (N(7)-methyl 5'-triphosphoguanosine)-ribonucleoside in mRNA + S-adenosyl-L-homocysteine. Its activity is regulated as follows. Methyltransferase activity is activated by RAMAC. Its function is as follows. Catalytic subunit of the mRNA-capping methyltransferase RNMT:RAMAC complex that methylates the N7 position of the added guanosine to the 5'-cap structure of mRNAs. Binds RNA containing 5'-terminal GpppC. The polypeptide is mRNA cap guanine-N(7) methyltransferase (RNMT) (Macaca fascicularis (Crab-eating macaque)).